The primary structure comprises 450 residues: MDGSETSHSSGLNDFLLRSSVSSGSRSMDVIVYLINDEIIQLTVDGLSVITAHELHKSIREALQLPETAQDVFALWLISPFLEVQLKPKHQPYKVCRQWHDLLARFTNCSSNDILQDEPFLQFRRNIFFPKARELQIAHERTLYLLYEEAKYNVLDGRYPCDVEDCELLGGLACRLELGPYNQNEHTPATIRPKLDSLFPPYLCKKRNGFFTTFKNKGGRQASFEQTVLNTYKEVKESSACTEEQAMKNHYREYLKKCHELPYYGCAFFHGVVDKPAQGFLNRSGRKPVSVAINLEGVSVIDRKEKHILISLTYPELSWDHTYPDEEEHILWLEFDGDAEGTPVNKLLKIYSKQAELMSGLIEYCIELSQTTESPASDFLPGNSQLSEKRSKLRRQESVLCNRMKHLNTIDYVEDGASIKRVKPKRTASFFTRQNTHYSAVQPSETPTET.

Residues 28–373 (MDVIVYLIND…YCIELSQTTE (346 aa)) enclose the FERM domain.

The protein resides in the cytoplasm. It is found in the cytosol. Its subcellular location is the cell membrane. Promotes the cell surface stability of RHBDF1 and RHBDF2 and prevents their degradation via the endolysosomal pathway. By acting on RHBDF proteins, involved in ADAM17-mediated ligand shedding. May negatively regulate Wnt signaling. This chain is FERM domain-containing protein 8 (frmd8), found in Xenopus tropicalis (Western clawed frog).